The primary structure comprises 592 residues: MACSKMSVDLECCICLEEDIERVDTIPCQHTVCRPCYLKPMINKCPVCRVRWIARERDPLAKDYTGEHYAHTYGFFAVNIDEESEEEEEEQVIEEEPQTPEIDPEEIELPRRFVDERIEYFLATGLRIDYVLTRGYCPSIQADEQEVLYLPLYTIYCNAYDANDDILHGQEIEITIQITRGECGSGWCEAQFVYVSITDSEDSGPKPITHSVKGGIGAVRFSREEIEFELQTPLPIESRTSYSHFEWEITTPYFKINQTGEELYPWAVLDFYEEEFWEPIVEPLDGPVDVDMSSYSAIGGIASMLRVTAAARRDNDEQYNEIIGRHVSRKVLNGGAEKDYIYLREINGKEFSIYDKIGNCFVGTNKTGITLPFTHVPSPAAIRGNHHILKEPEYIYGEERDTSYETALQSFDDWELIKREELLQRRYKREEQNLKYTSNRLFYFEKEFEEIMEDKWAIESYMCEDDDNTKPEYTTDMRVACEQRDRHGTDIVKCRLDKEVGSRRMHTLIDGESGVGKSFLAGHLSRGLVFDLDWITPNEDGSKPELPEDLHYPIIILGKRFDYDMREITKRLLYKKEYVVVKLSYMYFFYCI.

An RING-type zinc finger spans residues 12-49 (CCICLEEDIERVDTIPCQHTVCRPCYLKPMINKCPVCR). Positions 414 to 441 (WELIKREELLQRRYKREEQNLKYTSNRL) form a coiled coil.

The polypeptide is Putative RING finger protein ORF9 (Ostreid herpesvirus 1 (isolate France) (OsHV-1)).